Reading from the N-terminus, the 529-residue chain is Extracellular signal-regulated kinase 1 (529 aa).

Disordered stretches follow at residues Met1 to Ser20 and Gln100 to Asn131. The segment covering Phe8 to Ser20 has biased composition (polar residues). The segment covering Gln100–Gln117 has biased composition (low complexity). A Protein kinase domain is found at Tyr149–Ser439. Residues Ile155–Val163 and Lys178 each bind ATP. The active-site Proton acceptor is Asp275. Phosphothreonine is present on Thr309. The TXY motif lies at Thr309–Tyr311. Position 311 is a phosphotyrosine (Tyr311).

The protein belongs to the protein kinase superfamily. CMGC Ser/Thr protein kinase family. MAP kinase subfamily. Mg(2+) serves as cofactor. In terms of processing, dually phosphorylated on Thr-309 and Tyr-311, which activates the enzyme.

The catalysed reaction is L-seryl-[protein] + ATP = O-phospho-L-seryl-[protein] + ADP + H(+). The enzyme catalyses L-threonyl-[protein] + ATP = O-phospho-L-threonyl-[protein] + ADP + H(+). Its activity is regulated as follows. Activated by tyrosine and threonine phosphorylation. In terms of biological role, kinase involved in a signal transduction pathway. The sequence is that of Extracellular signal-regulated kinase 1 (erkA) from Dictyostelium discoideum (Social amoeba).